The following is a 143-amino-acid chain: Small ribosomal subunit protein uS11c (143 aa).

This sequence belongs to the universal ribosomal protein uS11 family. As to quaternary structure, part of the 30S ribosomal subunit.

The protein resides in the plastid. The protein localises to the chloroplast. The chain is Small ribosomal subunit protein uS11c from Zea mays (Maize).